Consider the following 185-residue polypeptide: Potassium-transporting ATPase KdpC subunit (185 aa).

Residues 14-34 (ALSLLTGVAYPLALTGIAAVI) traverse the membrane as a helical segment.

This sequence belongs to the KdpC family. The system is composed of three essential subunits: KdpA, KdpB and KdpC.

The protein resides in the cell inner membrane. Part of the high-affinity ATP-driven potassium transport (or Kdp) system, which catalyzes the hydrolysis of ATP coupled with the electrogenic transport of potassium into the cytoplasm. This subunit acts as a catalytic chaperone that increases the ATP-binding affinity of the ATP-hydrolyzing subunit KdpB by the formation of a transient KdpB/KdpC/ATP ternary complex. The polypeptide is Potassium-transporting ATPase KdpC subunit (Cereibacter sphaeroides (strain ATCC 17023 / DSM 158 / JCM 6121 / CCUG 31486 / LMG 2827 / NBRC 12203 / NCIMB 8253 / ATH 2.4.1.) (Rhodobacter sphaeroides)).